The primary structure comprises 280 residues: 2-dehydro-3-deoxyphosphooctonate aldolase (280 aa).

Belongs to the KdsA family.

It localises to the cytoplasm. The catalysed reaction is D-arabinose 5-phosphate + phosphoenolpyruvate + H2O = 3-deoxy-alpha-D-manno-2-octulosonate-8-phosphate + phosphate. It functions in the pathway carbohydrate biosynthesis; 3-deoxy-D-manno-octulosonate biosynthesis; 3-deoxy-D-manno-octulosonate from D-ribulose 5-phosphate: step 2/3. The protein operates within bacterial outer membrane biogenesis; lipopolysaccharide biosynthesis. The sequence is that of 2-dehydro-3-deoxyphosphooctonate aldolase from Neisseria meningitidis serogroup B (strain ATCC BAA-335 / MC58).